The primary structure comprises 247 residues: Sugar fermentation stimulation protein homolog (247 aa).

The protein belongs to the SfsA family.

The polypeptide is Sugar fermentation stimulation protein homolog (Oleidesulfovibrio alaskensis (strain ATCC BAA-1058 / DSM 17464 / G20) (Desulfovibrio alaskensis)).